Consider the following 344-residue polypeptide: Methionine import ATP-binding protein MetN (344 aa).

Residues 2–241 (IELQGLSQRF…PQHEVTRAMI (240 aa)) enclose the ABC transporter domain. Residue 38–45 (GRSGAGKS) participates in ATP binding.

Belongs to the ABC transporter superfamily. Methionine importer (TC 3.A.1.24) family. In terms of assembly, the complex is composed of two ATP-binding proteins (MetN), two transmembrane proteins (MetI) and a solute-binding protein (MetQ).

The protein localises to the cell inner membrane. It catalyses the reaction L-methionine(out) + ATP + H2O = L-methionine(in) + ADP + phosphate + H(+). It carries out the reaction D-methionine(out) + ATP + H2O = D-methionine(in) + ADP + phosphate + H(+). Part of the ABC transporter complex MetNIQ involved in methionine import. Responsible for energy coupling to the transport system. In Cupriavidus metallidurans (strain ATCC 43123 / DSM 2839 / NBRC 102507 / CH34) (Ralstonia metallidurans), this protein is Methionine import ATP-binding protein MetN.